Here is a 299-residue protein sequence, read N- to C-terminus: Protease HtpX homolog (299 aa).

The next 2 helical transmembrane spans lie at 7 to 24 (GILM…GALI) and 29 to 46 (GAII…FTFW). H130 contributes to the Zn(2+) binding site. The active site involves E131. Zn(2+) is bound at residue H134. 2 helical membrane passes run 145–165 (VTAT…FFGG) and 174–194 (PVGI…AGLV). E203 is a Zn(2+) binding site.

This sequence belongs to the peptidase M48B family. Zn(2+) serves as cofactor.

The protein resides in the cell inner membrane. In Cereibacter sphaeroides (strain ATCC 17025 / ATH 2.4.3) (Rhodobacter sphaeroides), this protein is Protease HtpX homolog.